We begin with the raw amino-acid sequence, 383 residues long: U-box domain-containing protein 63 (383 aa).

The segment at 166-186 (PDGNVSNSHRNTQQKRDFASV) is disordered. The U-box domain occupies 201–273 (SLKAILSDPV…HAFRQEEDSD (73 aa)).

It carries out the reaction S-ubiquitinyl-[E2 ubiquitin-conjugating enzyme]-L-cysteine + [acceptor protein]-L-lysine = [E2 ubiquitin-conjugating enzyme]-L-cysteine + N(6)-ubiquitinyl-[acceptor protein]-L-lysine.. It participates in protein modification; protein ubiquitination. Its function is as follows. Functions as an E3 ubiquitin ligase. The protein is U-box domain-containing protein 63 (PUB63) of Arabidopsis thaliana (Mouse-ear cress).